The sequence spans 122 residues: Fluoride-specific ion channel FluC (122 aa).

4 consecutive transmembrane segments (helical) span residues 6-26 (LVVGFGGFIGAILRMFSINLV), 33-53 (SISLGTLFVNVLGSFIIGLLF), 60-80 (GLSPLLKSFISTGFLGAFTTF), and 101-121 (LNIILNVFLCLFAAWLGFIIF). Na(+) is bound by residues G75 and T78.

This sequence belongs to the fluoride channel Fluc/FEX (TC 1.A.43) family.

The protein localises to the cell inner membrane. It carries out the reaction fluoride(in) = fluoride(out). Its activity is regulated as follows. Na(+) is not transported, but it plays an essential structural role and its presence is essential for fluoride channel function. Its function is as follows. Fluoride-specific ion channel. Important for reducing fluoride concentration in the cell, thus reducing its toxicity. The polypeptide is Fluoride-specific ion channel FluC (Campylobacter jejuni subsp. jejuni serotype O:6 (strain 81116 / NCTC 11828)).